The primary structure comprises 448 residues: MGKYFGTDGVRGVANKELTPELAFKIGRFGGYVLTKDTDRPKVIIGRDTRISGHMLEGALVAGLLSTGAEVMRLGVISTPGVAYLTKALDAQAGVMISASHNPVQDNGIKFFGSDGFKLTDEQEAEIEALLDKEVDELPRPTGTNLGQVSDYFEGGQKYLQYIKQTVEEDFSGLHIALDCAHGATSSLAPYLFADLEADISTMGTSPNGMNINDGVGSTHPEVLAELVKEKGADIGLAFDGDGDRLIAVDEKGNIVDGDQIMFICAKYMKETGQLKHNTVVSTVMSNLGFYKALEANGITSDKTAVGDRYVMEEMKRGGYNLGGEQSGHIILLDYITTGDGMLSALQLVNIMKMTKKPLSELAGEMTKFPQLLVNVRVTDKKLALENEKIKEIIRVVEEEMNGDGRILVRPSGTEPLIRVMAEAPTQEVCDAYVHRIVEVVKAEVGAE.

Ser-100 acts as the Phosphoserine intermediate in catalysis. Mg(2+)-binding residues include Ser-100, Asp-240, Asp-242, and Asp-244. At Ser-100 the chain carries Phosphoserine.

Belongs to the phosphohexose mutase family. Mg(2+) is required as a cofactor. Activated by phosphorylation.

The catalysed reaction is alpha-D-glucosamine 1-phosphate = D-glucosamine 6-phosphate. Catalyzes the conversion of glucosamine-6-phosphate to glucosamine-1-phosphate. The polypeptide is Phosphoglucosamine mutase (Bacillus anthracis (strain A0248)).